Reading from the N-terminus, the 274-residue chain is 2,3,4,5-tetrahydropyridine-2,6-dicarboxylate N-succinyltransferase (274 aa).

This sequence belongs to the transferase hexapeptide repeat family.

It localises to the cytoplasm. It catalyses the reaction (S)-2,3,4,5-tetrahydrodipicolinate + succinyl-CoA + H2O = (S)-2-succinylamino-6-oxoheptanedioate + CoA. It participates in amino-acid biosynthesis; L-lysine biosynthesis via DAP pathway; LL-2,6-diaminopimelate from (S)-tetrahydrodipicolinate (succinylase route): step 1/3. The chain is 2,3,4,5-tetrahydropyridine-2,6-dicarboxylate N-succinyltransferase from Escherichia coli (strain SMS-3-5 / SECEC).